The sequence spans 567 residues: Nucleolus and neural progenitor protein (567 aa).

Ser-265 is modified (phosphoserine). Residues 437-457 form a disordered region; the sequence is SKHHLRQRRSQNKFLRRQRKP. Positions 442–460 are nuclear localization signal; sequence RQRRSQNKFLRRQRKPQRK.

This sequence belongs to the nepro family.

The protein localises to the nucleus. Its subcellular location is the nucleolus. In terms of biological role, may play a role in cortex development as part of the Notch signaling pathway. Downstream of Notch may repress the expression of proneural genes and inhibit neuronal differentiation thereby maintaining neural progenitors. May also play a role in preimplentation embryo development. The protein is Nucleolus and neural progenitor protein of Homo sapiens (Human).